The sequence spans 156 residues: Large ribosomal subunit protein uL15 (156 aa).

The disordered stretch occupies residues 1 to 44 (MKLNELRDNPGASPKRTRVGRGPGSGKGKMGGRGIKGQKSRSGV). Residues 21 to 35 (RGPGSGKGKMGGRGI) are compositionally biased toward gly residues.

This sequence belongs to the universal ribosomal protein uL15 family. In terms of assembly, part of the 50S ribosomal subunit.

In terms of biological role, binds to the 23S rRNA. In Ruegeria sp. (strain TM1040) (Silicibacter sp.), this protein is Large ribosomal subunit protein uL15.